The chain runs to 1450 residues: DNA-directed RNA polymerase RPB1 homolog (1450 aa).

It belongs to the RNA polymerase beta' chain family. As to quaternary structure, part of the viral DNA-directed RNA polymerase that consists of 8 polII-like subunits (RPB1, RPB2, RPB3, RPB5, RPB6, RPB7, RPB9, RPB10), a capping enzyme and a termination factor.

Its subcellular location is the virion. The catalysed reaction is RNA(n) + a ribonucleoside 5'-triphosphate = RNA(n+1) + diphosphate. Catalytic component of the DNA-directed RNA polymerase (RNAP) that catalyzes the transcription in the cytoplasm of viral DNA into RNA using the four ribonucleoside triphosphates as substrates. Forms the polymerase active center together with RPB2. Part of the core element with the central large cleft, the clamp element that moves to open and close the cleft and the jaws that are thought to grab the incoming DNA template. The chain is DNA-directed RNA polymerase RPB1 homolog from African swine fever virus (isolate Warthog/Namibia/Wart80/1980) (ASFV).